A 206-amino-acid polypeptide reads, in one-letter code: Fibroblast growth factor 4 (206 aa).

An N-terminal signal peptide occupies residues 1–29; the sequence is MAGPGTAAAALLPAVLLAVLAPWAGRGGA.

It belongs to the heparin-binding growth factors family. Interacts with FGFR1, FGFR2, FGFR3 and FGFR4. Affinity between fibroblast growth factors (FGFs) and their receptors is increased by heparan sulfate glycosaminoglycans that function as coreceptors.

The protein localises to the secreted. In terms of biological role, plays an important role in the regulation of embryonic development, cell proliferation, and cell differentiation. Required for normal limb and cardiac valve development during embryogenesis. May play a role in embryonic molar tooth bud development via inducing the expression of MSX1, MSX2 and MSX1-mediated expression of SDC1 in dental mesenchyme cells. The sequence is that of Fibroblast growth factor 4 from Bos taurus (Bovine).